Reading from the N-terminus, the 740-residue chain is Homeobox protein 4 (740 aa).

A compositionally biased stretch (polar residues) spans 1-13 (MNTVEENNTKITD). Disordered stretches follow at residues 1 to 41 (MNTV…ENLS) and 179 to 491 (NNNN…NNEI). Low complexity-rich tracts occupy residues 14 to 34 (NNNN…NNKN), 179 to 241 (NNNN…PQQN), 251 to 288 (NNNN…NNNN), and 303 to 316 (STTD…SVPS). The stretch at 254–287 (NINNNNINKNNNNYNNNNNNKNNNNNNNNNNNNN) forms a coiled coil. The span at 317 to 328 (NKKKSSKTKQKS) shows a compositional bias: basic residues. Residues 339 to 363 (HKSNYHQQPNQNSQHLQSKPNSPIL) are compositionally biased toward polar residues. 2 stretches are compositionally biased toward low complexity: residues 365–390 (SSPL…SPPQ) and 397–491 (NNNF…NNEI). Positions 472 to 500 (NTNTNNNNNKNNNNNNNNEIENNNNEELI) form a coiled coil. The homeobox DNA-binding region spans 605-667 (RPKKGAKLSK…NTRRRKVPTL (63 aa)). Residues 686 to 722 (NNNNNNGGNSNFKNNNNNTITTTSTSNNNNNNNNNNH) show a composition bias toward low complexity. The disordered stretch occupies residues 686–740 (NNNNNNGGNSNFKNNNNNTITTTSTSNNNNNNNNNNHNEMECDDGENEESSEYDD). Positions 726–740 (ECDDGENEESSEYDD) are enriched in acidic residues.

The protein resides in the nucleus. In terms of biological role, putative transcription factor. The chain is Homeobox protein 4 (hbx4) from Dictyostelium discoideum (Social amoeba).